A 211-amino-acid polypeptide reads, in one-letter code: tRNA (guanine-N(7)-)-methyltransferase (211 aa).

Residues Glu-44, Asp-69, Asp-96, and Asp-118 each contribute to the S-adenosyl-L-methionine site. Asp-118 is an active-site residue. Lys-122 lines the substrate pocket. Residues 124-129 (RHEKRR) form an interaction with RNA region. Residues Asp-154 and 191–194 (TEYE) contribute to the substrate site.

This sequence belongs to the class I-like SAM-binding methyltransferase superfamily. TrmB family.

It carries out the reaction guanosine(46) in tRNA + S-adenosyl-L-methionine = N(7)-methylguanosine(46) in tRNA + S-adenosyl-L-homocysteine. It participates in tRNA modification; N(7)-methylguanine-tRNA biosynthesis. Its function is as follows. Catalyzes the formation of N(7)-methylguanine at position 46 (m7G46) in tRNA. This Streptococcus equi subsp. zooepidemicus (strain H70) protein is tRNA (guanine-N(7)-)-methyltransferase.